The sequence spans 111 residues: MENWREISEDIVSSLLEDGSDPEILYEVEHHFVCEDFPKLEQAALAAFKLGYDVEEPAELELEDGAKIWSFDIVVESELDVDVIMEDVDKLAALAVECEVEYDGWGTYFQE.

It belongs to the RraB family. In terms of assembly, interacts with the C-terminal region of Rne.

The protein localises to the cytoplasm. In terms of biological role, globally modulates RNA abundance by binding to RNase E (Rne) and regulating its endonucleolytic activity. Can modulate Rne action in a substrate-dependent manner by altering the composition of the degradosome. This chain is Regulator of ribonuclease activity B, found in Pseudoalteromonas translucida (strain TAC 125).